The primary structure comprises 136 residues: Large ribosomal subunit protein uL16 (136 aa).

The protein belongs to the universal ribosomal protein uL16 family. In terms of assembly, part of the 50S ribosomal subunit.

Binds 23S rRNA and is also seen to make contacts with the A and possibly P site tRNAs. The chain is Large ribosomal subunit protein uL16 from Actinobacillus pleuropneumoniae serotype 5b (strain L20).